Here is a 151-residue protein sequence, read N- to C-terminus: Large ribosomal subunit protein bL9 (151 aa).

Belongs to the bacterial ribosomal protein bL9 family.

Its function is as follows. Binds to the 23S rRNA. The chain is Large ribosomal subunit protein bL9 from Prochlorococcus marinus (strain MIT 9215).